A 132-amino-acid chain; its full sequence is Acyl-CoA thioester hydrolase YciA (132 aa).

The 116-residue stretch at 8-123 (PQGDLVLRTL…LFKYVAVDPE (116 aa)) folds into the HotDog ACOT-type domain.

It belongs to the acyl coenzyme A hydrolase family.

Catalyzes the hydrolysis of the thioester bond in palmitoyl-CoA and malonyl-CoA. The chain is Acyl-CoA thioester hydrolase YciA (yciA) from Escherichia coli O6:H1 (strain CFT073 / ATCC 700928 / UPEC).